The following is a 312-amino-acid chain: Pantothenate kinase (312 aa).

Residue 97-104 coordinates ATP; sequence GSVAVGKS.

Belongs to the prokaryotic pantothenate kinase family.

It is found in the cytoplasm. It catalyses the reaction (R)-pantothenate + ATP = (R)-4'-phosphopantothenate + ADP + H(+). It participates in cofactor biosynthesis; coenzyme A biosynthesis; CoA from (R)-pantothenate: step 1/5. In Mycolicibacterium smegmatis (strain ATCC 700084 / mc(2)155) (Mycobacterium smegmatis), this protein is Pantothenate kinase.